The chain runs to 128 residues: Large ribosomal subunit protein eL22 (128 aa).

At T62 the chain carries Phosphothreonine. S66 is modified (phosphoserine). N6-succinyllysine is present on K69.

This sequence belongs to the eukaryotic ribosomal protein eL22 family. In terms of assembly, component of the large ribosomal subunit.

Its subcellular location is the cytoplasm. Its function is as follows. Component of the large ribosomal subunit. The ribosome is a large ribonucleoprotein complex responsible for the synthesis of proteins in the cell. This is Large ribosomal subunit protein eL22 (RPL22) from Sus scrofa (Pig).